Reading from the N-terminus, the 261-residue chain is Aromatic peroxygenase (261 aa).

C36 lines the heme pocket. N-linked (GlcNAc...) asparagine glycans are attached at residues N100, N137, N141, and N220.

Belongs to the chloroperoxidase family. Heme b is required as a cofactor. In terms of processing, N-glycosylated.

In terms of biological role, aromatic peroxidase that oxidizes aryl alcohols into the corresponding aldehydes and then into the corresponding benzoic acids. Catalyzes the regioselective peroxide-dependent hydroxylation of naphthalene to 1-naphthol and to a far lesser extent 2-naphthol via a naphthalene 1,2-oxide intermediate. Halogenates phenol to 2-bromophenol and 4-bromophenol. Oxidizes the sulfur-containing heterocycle dibenzothiophene to yield sulfoxidation products, and trace amounts of ring-hydroxylation products. This is Aromatic peroxygenase from Coprinellus radians (Coprophilous mushroom).